A 304-amino-acid polypeptide reads, in one-letter code: Dihydroorotate dehydrogenase B (NAD(+)), catalytic subunit (304 aa).

Residues S22 and 46–47 (KG) contribute to the FMN site. Residues K46 and 70 to 74 (NAIGL) each bind substrate. The FMN site is built by N100 and N128. N128 lines the substrate pocket. C131 functions as the Nucleophile in the catalytic mechanism. K166 and I192 together coordinate FMN. Residue 193-194 (NT) participates in substrate binding. Residues G218, 244-245 (GG), and 266-267 (GT) each bind FMN.

The protein belongs to the dihydroorotate dehydrogenase family. Type 1 subfamily. Heterotetramer of 2 PyrK and 2 PyrD type B subunits. FMN serves as cofactor.

The protein resides in the cytoplasm. It carries out the reaction (S)-dihydroorotate + NAD(+) = orotate + NADH + H(+). It participates in pyrimidine metabolism; UMP biosynthesis via de novo pathway; orotate from (S)-dihydroorotate (NAD(+) route): step 1/1. Catalyzes the conversion of dihydroorotate to orotate with NAD(+) as electron acceptor. The polypeptide is Dihydroorotate dehydrogenase B (NAD(+)), catalytic subunit (pyrD) (Trichlorobacter lovleyi (strain ATCC BAA-1151 / DSM 17278 / SZ) (Geobacter lovleyi)).